The following is a 264-amino-acid chain: Cancer/testis antigen 55 (264 aa).

The segment at 242–264 is disordered; it reads SSSGFQDDGGLGRPKRERRSQSI. Basic residues predominate over residues 254–264; it reads RPKRERRSQSI.

In terms of assembly, interacts with GABARAP; this interaction may be important for GABARAP protein stability. Isoform 1 interacts with LAMP2; this interaction may be important for LAMP2 protein stability. As to expression, testis-specific. Expressed in spermatozoa (at protein level).

Its subcellular location is the cytoplasm. It is found in the cytoplasmic vesicle. It localises to the secretory vesicle. The protein resides in the acrosome. The protein localises to the cell projection. Its subcellular location is the cilium. It is found in the flagellum. Plays a role in spermatogenesis, possibly acting in the regulation of the autophagy pathway. This Homo sapiens (Human) protein is Cancer/testis antigen 55 (CT55).